Consider the following 165-residue polypeptide: Endoribonuclease YbeY (165 aa).

Zn(2+) contacts are provided by His130, His134, and His140.

The protein belongs to the endoribonuclease YbeY family. The cofactor is Zn(2+).

Its subcellular location is the cytoplasm. Its function is as follows. Single strand-specific metallo-endoribonuclease involved in late-stage 70S ribosome quality control and in maturation of the 3' terminus of the 16S rRNA. This is Endoribonuclease YbeY from Streptococcus gordonii (strain Challis / ATCC 35105 / BCRC 15272 / CH1 / DL1 / V288).